The chain runs to 408 residues: Imidazolonepropionase (408 aa).

Fe(3+) is bound by residues histidine 73 and histidine 75. Positions 73 and 75 each coordinate Zn(2+). 3 residues coordinate 4-imidazolone-5-propanoate: arginine 82, tyrosine 145, and histidine 178. Tyrosine 145 is an N-formimidoyl-L-glutamate binding site. Fe(3+) is bound at residue histidine 243. Histidine 243 lines the Zn(2+) pocket. Glutamine 246 lines the 4-imidazolone-5-propanoate pocket. Aspartate 318 is a binding site for Fe(3+). Position 318 (aspartate 318) interacts with Zn(2+). N-formimidoyl-L-glutamate is bound by residues asparagine 320 and glycine 322. Residue serine 323 coordinates 4-imidazolone-5-propanoate.

It belongs to the metallo-dependent hydrolases superfamily. HutI family. Zn(2+) is required as a cofactor. It depends on Fe(3+) as a cofactor.

It localises to the cytoplasm. It catalyses the reaction 4-imidazolone-5-propanoate + H2O = N-formimidoyl-L-glutamate. It functions in the pathway amino-acid degradation; L-histidine degradation into L-glutamate; N-formimidoyl-L-glutamate from L-histidine: step 3/3. Functionally, catalyzes the hydrolytic cleavage of the carbon-nitrogen bond in imidazolone-5-propanoate to yield N-formimidoyl-L-glutamate. It is the third step in the universal histidine degradation pathway. The polypeptide is Imidazolonepropionase (Shewanella sp. (strain W3-18-1)).